A 98-amino-acid polypeptide reads, in one-letter code: Keratin-associated protein 3-3 (98 aa).

Alanine 2 carries the N-acetylalanine modification. 3 tandem repeats follow at residues 3-7 (CCAPL), 8-12 (CCSAR), and 47-51 (CCDNC). The segment at 3 to 59 (CCAPLCCSARTSPATTICSSDKFCRCGVCLPSTCPHTVWLLEPTCCDNCPPPCHIPQ) is 3 X 5 AA repeats of C-C-X(3).

Belongs to the KRTAP type 3 family. In terms of assembly, interacts with hair keratins.

In terms of biological role, in the hair cortex, hair keratin intermediate filaments are embedded in an interfilamentous matrix, consisting of hair keratin-associated proteins (KRTAP), which are essential for the formation of a rigid and resistant hair shaft through their extensive disulfide bond cross-linking with abundant cysteine residues of hair keratins. The matrix proteins include the high-sulfur and high-glycine-tyrosine keratins. In Bos taurus (Bovine), this protein is Keratin-associated protein 3-3.